The primary structure comprises 542 residues: MLO-like protein 7 (542 aa).

Residues 1–38 (MITRSRCRRSLLWFLVFHGGATATGAPSGGKELSQTPT) lie on the Extracellular side of the membrane. The helical transmembrane segment at 39-59 (WAVAVVCTFLILISHLLEKGL) threads the bilayer. Residues 60–82 (QRLANWLWKKHKNSLLEALEKIK) are Cytoplasmic-facing. A helical membrane pass occupies residues 83–103 (AELMILGFISLLLTFGEPYIL). Residues 104–165 (KICVPRKAAL…ITLKGLHQLH (62 aa)) lie on the Extracellular side of the membrane. The helical transmembrane segment at 166–186 (ILLFFLAIFHIVYSLITMMLS) threads the bilayer. Residues 187-288 (RLKIRGWKKW…IKRSLEDDFK (102 aa)) are Cytoplasmic-facing. The chain crosses the membrane as a helical span at residues 289–309 (LVVGISPVLWASFVIFLLFNV). Topologically, residues 310–315 (NGWRTL) are extracellular. A helical membrane pass occupies residues 316-336 (FWASIPPLLIILAVGTKLQAI). The Cytoplasmic segment spans residues 337–374 (MATMALEIVETHAVVQGMPLVQGSDRYFWFDCPQLLLH). A helical membrane pass occupies residues 375 to 395 (LIHFALFQNAFQITHFFWIWY). The Extracellular segment spans residues 396-414 (SFGLKSCFHKDFNLVVSKL). The helical transmembrane segment at 415 to 435 (FLCLGALILCSYITLPLYALV) threads the bilayer. The Cytoplasmic segment spans residues 436–542 (TQMGSHMKKA…QQQEMQFHNS (107 aa)). The calmodulin-binding stretch occupies residues 449 to 470 (EQMAKALKKWHKDIKLKKGKAR).

Belongs to the MLO family. Restricted to pollen, synergids, pistils and immature anthers. Also detected in seedlings, leaves, stems and inflorescens.

It is found in the cell membrane. Its subcellular location is the endomembrane system. Functionally, may be involved in modulation of pathogen defense and leaf cell death. Activity seems to be regulated by Ca(2+)-dependent calmodulin binding and seems not to require heterotrimeric G proteins. Controls pollen tube reception in the female gametophyte synergids. This Arabidopsis thaliana (Mouse-ear cress) protein is MLO-like protein 7 (MLO7).